Consider the following 402-residue polypeptide: MESRGPLATSRLLLLLLLLLLRHTRQGWALRPVLPTQSAHDPPAVHLSNGPGQEPIAVMTFDLTKITKTSSSFEVRTWDPEGVIFYGDTNPKDDWFMLGLRDGRPEIQLHNHWAQLTVGAGPRLDDGRWHQVEVKMEGDSVLLEVDGEEVLRLRQVSGPLTSKRHPIMRIALGGLLFPASNLRLPLVPALDGCLRRDSWLDKQAEISASAPTSLRSCDVESNPGIFLPPGTQAEFNLRDIPQPHAEPWAFSLDLGLKQAAGSGHLLALGTPENPSWLSLHLQDQKVVLSSGSGPGLDLPLVLGLPLQLKLSMSRVVLSQGSKMKALALPPLGLAPLLNLWAKPQGRLFLGALPGEDSSTSFCLNGLWAQGQRLDVDQALNRSHEIWTHSCPQSPGNGTDASH.

Positions 1 to 29 (MESRGPLATSRLLLLLLLLLLRHTRQGWA) are cleaved as a signal peptide. An O-linked (GalNAc...) threonine glycan is attached at Thr-36. Laminin G-like domains lie at 45–217 (VHLS…LRSC) and 224–390 (GIFL…THSC). Cystine bridges form between Cys-193/Cys-217 and Cys-362/Cys-390. Asn-380 and Asn-396 each carry an N-linked (GlcNAc...) asparagine glycan.

In terms of assembly, homodimer. In terms of processing, variant Asn-356 contains one N-linked (GlcNAc...) at position 356. As to expression, isoform 1 and isoform 2 are present in liver and testis.

The protein localises to the secreted. Its function is as follows. Functions as an androgen transport protein, but may also be involved in receptor mediated processes. Each dimer binds one molecule of steroid. Specific for 5-alpha-dihydrotestosterone, testosterone, and 17-beta-estradiol. Regulates the plasma metabolic clearance rate of steroid hormones by controlling their plasma concentration. This chain is Sex hormone-binding globulin, found in Homo sapiens (Human).